Reading from the N-terminus, the 235-residue chain is Orotidine 5'-phosphate decarboxylase (235 aa).

Residues D17, K39, 66–75 (DMKLLDIDHT), T121, R182, Q191, and R212 contribute to the substrate site. The Proton donor role is filled by K68.

Belongs to the OMP decarboxylase family. Type 1 subfamily. In terms of assembly, homodimer.

It carries out the reaction orotidine 5'-phosphate + H(+) = UMP + CO2. The protein operates within pyrimidine metabolism; UMP biosynthesis via de novo pathway; UMP from orotate: step 2/2. Catalyzes the decarboxylation of orotidine 5'-monophosphate (OMP) to uridine 5'-monophosphate (UMP). The protein is Orotidine 5'-phosphate decarboxylase of Bartonella bacilliformis.